We begin with the raw amino-acid sequence, 209 residues long: ATP phosphoribosyltransferase (209 aa).

Belongs to the ATP phosphoribosyltransferase family. Short subfamily. Heteromultimer composed of HisG and HisZ subunits.

The protein resides in the cytoplasm. It carries out the reaction 1-(5-phospho-beta-D-ribosyl)-ATP + diphosphate = 5-phospho-alpha-D-ribose 1-diphosphate + ATP. The protein operates within amino-acid biosynthesis; L-histidine biosynthesis; L-histidine from 5-phospho-alpha-D-ribose 1-diphosphate: step 1/9. Its function is as follows. Catalyzes the condensation of ATP and 5-phosphoribose 1-diphosphate to form N'-(5'-phosphoribosyl)-ATP (PR-ATP). Has a crucial role in the pathway because the rate of histidine biosynthesis seems to be controlled primarily by regulation of HisG enzymatic activity. The polypeptide is ATP phosphoribosyltransferase (Caldicellulosiruptor saccharolyticus (strain ATCC 43494 / DSM 8903 / Tp8T 6331)).